A 529-amino-acid polypeptide reads, in one-letter code: UDP-glucuronosyltransferase 2B28 (529 aa).

Residues 1–24 (MALKWTSVLLLIHLGCYFSSGSCG) form the signal peptide. K135 carries the post-translational modification N6-succinyllysine. The N-linked (GlcNAc...) asparagine glycan is linked to N315. A helical membrane pass occupies residues 495–517 (GFLLACVATVIFVVTKFCLFCFW).

Belongs to the UDP-glycosyltransferase family. Expressed in the liver, breast and kidney.

It is found in the endoplasmic reticulum membrane. The protein resides in the cytoplasm. Its subcellular location is the perinuclear region. It carries out the reaction glucuronate acceptor + UDP-alpha-D-glucuronate = acceptor beta-D-glucuronoside + UDP + H(+). In terms of biological role, UDP-glucuronosyltransferase (UGT) that catalyzes phase II biotransformation reactions in which lipophilic substrates are conjugated with glucuronic acid to increase the metabolite's water solubility, thereby facilitating excretion into either the urine or bile. Essential for the elimination and detoxification of drugs, xenobiotics and endogenous compounds. Catalyzes the glucuronidation of endogenous steroid hormones such as androgens (androsterone, 3alpha-androstanediol) and estrogens (estradiol, estrone). Catalyzes the glucuronidation of bile acid substrates, which are natural detergents for dietary lipids absorption. Displays glucuronidation activity toward the phenolic compounds eugenol. Functionally, lack UDP-glucuronosyltransferase (UGT) activity. This chain is UDP-glucuronosyltransferase 2B28, found in Homo sapiens (Human).